Consider the following 479-residue polypeptide: Transcription factor CP2-like protein 1 (479 aa).

The mediate transcriptional repression stretch occupies residues 1–52 (MLFWHTQPEHYNQHNSGSYLRDVLALPIFKQEEPQLSPENGARLPPLQYVLC). The 238-residue stretch at 43-280 (RLPPLQYVLC…PSPSYNGSPN (238 aa)) folds into the Grh/CP2 DB domain. Disordered regions lie at residues 219–248 (KPKGADRKQKTDREKMEKRTAQEKEKYQPS) and 260–301 (WPDV…LPLG). Positions 221–245 (KGADRKQKTDREKMEKRTAQEKEKY) are enriched in basic and acidic residues. Residues 261 to 365 (PDVPYQANNT…IRLFNAIKGR (105 aa)) form an SAM2-like domain region. Positions 266–292 (QANNTPSPSYNGSPNSFGLREGNSSPN) are enriched in polar residues.

This sequence belongs to the grh/CP2 family. CP2 subfamily. Forms homohexamers via its SAM-like domain. Interacts with Mta1; which is indispensable for Tfcp2l1-mediated self-renewal-promoting effect and endoderm-inhibiting action. Highly expressed in placenta, testis, small intestine, kidney and stomach. Low levels of expression in lung, mesenteric lymph nodes, muscle, ovary, and thymus. No expression was detected in brain, heart, liver, and spleen. Expressed in eccrine glands in the palm. Expression is prominent in both kidney collecting ducts intercalated (IC) and principal (PC) cells. Also expressed in the thick limb of Henle and connecting segments of the nephron.

The protein resides in the nucleus. Transcription factor that facilitates establishment and maintenance of pluripotency in embryonic stem cells (ESCs). With Klf2, acts as the major effector of self-renewal that mediates induction of pluripotency downstream of LIF/Stat3 and Wnt/beta-catenin signaling. Required for normal duct development in the salivary gland and kidney. Coordinates the development of the kidney collecting ducts intercalated (IC) and principal (PC) cells, which regulate acid-base and salt-water homeostasis, respectively. Regulates the expression of IC genes including subunits B1 and D2 of the V-ATPase complex, Oxgr1, Ca12, Slc4a1, Aqp6 and IC-specific transcription factor Foxi1. Also regulates the expression of Jag1 and subsequent notch signaling in the collecting duct. Jag1 initiates notch signaling in PCs but inhibits notch signaling in ICs. Acts as a transcriptional suppressor that may suppress UBP1-mediated transcriptional activation. Modulates the placental expression of CYP11A1. This Mus musculus (Mouse) protein is Transcription factor CP2-like protein 1 (Tfcp2l1).